The following is a 476-amino-acid chain: Bifunctional protein HldE (476 aa).

The interval 1 to 318 (MKPILPDYNS…AEAVHGSQDT (318 aa)) is ribokinase. 195-198 (NMKE) contributes to the ATP binding site. The active site involves Asp264. The interval 344-476 (MTNGCFDILH…IINAIKGGKG (133 aa)) is cytidylyltransferase.

The protein in the N-terminal section; belongs to the carbohydrate kinase PfkB family. This sequence in the C-terminal section; belongs to the cytidylyltransferase family. In terms of assembly, homodimer.

It carries out the reaction D-glycero-beta-D-manno-heptose 7-phosphate + ATP = D-glycero-beta-D-manno-heptose 1,7-bisphosphate + ADP + H(+). It catalyses the reaction D-glycero-beta-D-manno-heptose 1-phosphate + ATP + H(+) = ADP-D-glycero-beta-D-manno-heptose + diphosphate. Its pathway is nucleotide-sugar biosynthesis; ADP-L-glycero-beta-D-manno-heptose biosynthesis; ADP-L-glycero-beta-D-manno-heptose from D-glycero-beta-D-manno-heptose 7-phosphate: step 1/4. It participates in nucleotide-sugar biosynthesis; ADP-L-glycero-beta-D-manno-heptose biosynthesis; ADP-L-glycero-beta-D-manno-heptose from D-glycero-beta-D-manno-heptose 7-phosphate: step 3/4. It functions in the pathway bacterial outer membrane biogenesis; LPS core biosynthesis. Functionally, catalyzes the phosphorylation of D-glycero-D-manno-heptose 7-phosphate at the C-1 position to selectively form D-glycero-beta-D-manno-heptose-1,7-bisphosphate. Catalyzes the ADP transfer from ATP to D-glycero-beta-D-manno-heptose 1-phosphate, yielding ADP-D-glycero-beta-D-manno-heptose. The polypeptide is Bifunctional protein HldE (Vibrio parahaemolyticus serotype O3:K6 (strain RIMD 2210633)).